Reading from the N-terminus, the 369-residue chain is 2-aminoethylphosphonate--pyruvate transaminase (369 aa).

Lys193 is modified (N6-(pyridoxal phosphate)lysine).

The protein belongs to the class-V pyridoxal-phosphate-dependent aminotransferase family. PhnW subfamily. As to quaternary structure, homodimer. The cofactor is pyridoxal 5'-phosphate.

It carries out the reaction (2-aminoethyl)phosphonate + pyruvate = phosphonoacetaldehyde + L-alanine. Functionally, involved in phosphonate degradation. This chain is 2-aminoethylphosphonate--pyruvate transaminase, found in Burkholderia pseudomallei (strain 668).